The sequence spans 485 residues: Ribulose bisphosphate carboxylase large chain (485 aa).

Asparagine 124 and threonine 174 together coordinate substrate. Lysine 176 functions as the Proton acceptor in the catalytic mechanism. Position 178 (lysine 178) interacts with substrate. Positions 202, 204, and 205 each coordinate Mg(2+). Lysine 202 carries the N6-carboxylysine modification. The active-site Proton acceptor is histidine 294. 3 residues coordinate substrate: arginine 295, histidine 327, and serine 379.

This sequence belongs to the RuBisCO large chain family. Type I subfamily. Heterohexadecamer of 8 large chains and 8 small chains. It depends on Mg(2+) as a cofactor.

The enzyme catalyses 2 (2R)-3-phosphoglycerate + 2 H(+) = D-ribulose 1,5-bisphosphate + CO2 + H2O. It carries out the reaction D-ribulose 1,5-bisphosphate + O2 = 2-phosphoglycolate + (2R)-3-phosphoglycerate + 2 H(+). Its function is as follows. RuBisCO catalyzes two reactions: the carboxylation of D-ribulose 1,5-bisphosphate, the primary event in carbon dioxide fixation, as well as the oxidative fragmentation of the pentose substrate. Both reactions occur simultaneously and in competition at the same active site. This chain is Ribulose bisphosphate carboxylase large chain, found in Rhodopseudomonas palustris (strain HaA2).